A 538-amino-acid polypeptide reads, in one-letter code: Carotenoid 9,10(9',10')-cleavage dioxygenase 1 (538 aa).

The Fe cation site is built by His222, His270, His336, and His523.

This sequence belongs to the carotenoid oxygenase family. Homodimer. It depends on Fe(2+) as a cofactor. As to expression, high expression in flowers and siliques. Also detected in stems, leaves and roots.

It is found in the cytoplasm. The catalysed reaction is all-trans-zeaxanthin + 2 O2 = 4,9-dimethyldodeca-2,4,6,8,10-pentaenedial + 2 (3R)-hydroxy-beta-ionone. Cleaves a variety of carotenoids symmetrically at both the 9-10 and 9'-10' double bonds. Active on beta,beta-carotene, lutein, zeaxanthin, all-trans-violaxanthin, 9-cis-violaxanthin and 9'-cis-neoxanthin. With most substrates, the carotenoid is symmetrically cleaved. Probably not involved in abscisic acid biosynthesis. This Arabidopsis thaliana (Mouse-ear cress) protein is Carotenoid 9,10(9',10')-cleavage dioxygenase 1 (CCD1).